A 282-amino-acid chain; its full sequence is MQTLKSQRAMPTATPSDQKTTAFLTIENVSKVYPTAKGPYTVLENVNLTVNEGEFICVIGHSGCGKSTLLNMVSGFASPTDGSVQVGGKIITEPGPDRMVVFQNYALLPWLTALENVYIAVDAVHSQKTEAEKRAIAKDHLAMVGLTDSMDKKPGQISGGMKQRVSIARALAIRPEVLILDEPFGALDAITKEELQEELLQIWNDHRCTVLMITHDIDEALFLADRLVMMTNGPHANIGEIMTIPFSRPRDRDRIMEDPTYYQLRNYALDFLYNRFAHDDVA.

One can recognise an ABC transporter domain in the interval 24–257 (LTIENVSKVY…RPRDRDRIME (234 aa)). 60–67 (GHSGCGKS) lines the ATP pocket.

Belongs to the ABC transporter superfamily. Nitrate/nitrite/cyanate uptake transporter (NitT) (TC 3.A.1.16) family. The complex is composed of two ATP-binding proteins (CmpC and CmpD), a transmembrane protein (CmpB) and a solute-binding protein (CmpA).

The protein localises to the cell inner membrane. Part of the ABC transporter complex CmpABCD involved in bicarbonate transport. Responsible for energy coupling to the transport system. The chain is Bicarbonate transport ATP-binding protein CmpD (cmpD) from Synechocystis sp. (strain ATCC 27184 / PCC 6803 / Kazusa).